The sequence spans 418 residues: uncharacterized protein (418 aa).

The span at 282 to 297 shows a compositional bias: basic and acidic residues; sequence EEHSSIAKLDSEEKIR. Residues 282 to 346 are disordered; the sequence is EEHSSIAKLD…SASVDDVSEE (65 aa). Low complexity predominate over residues 304 to 316; the sequence is SSTSLSPDPTSDN. Residues 322 to 337 show a composition bias toward polar residues; it reads WVSSQDTSKNSSNLAS.

This is an uncharacterized protein from Schizosaccharomyces pombe (strain 972 / ATCC 24843) (Fission yeast).